We begin with the raw amino-acid sequence, 239 residues long: Putative zinc finger protein 132L (239 aa).

The segment at 20–40 (DASLSTKSPKREPSQEKEIKK) is disordered. Residues 28 to 40 (PKREPSQEKEIKK) are compositionally biased toward basic and acidic residues. 2 consecutive C3H1-type zinc fingers follow at residues 44-68 (IKKN…HPGE) and 81-106 (RRKT…HDES). The disordered stretch occupies residues 128–151 (PGECKFSHPPPPPPSPPSPPPKEE). Pro residues predominate over residues 135 to 147 (HPPPPPPSPPSPP).

The sequence is that of Putative zinc finger protein 132L from Acheta domesticus (House cricket).